The chain runs to 109 residues: Nucleoid-associated protein Caul_4574 (109 aa).

It belongs to the YbaB/EbfC family. Homodimer.

Its subcellular location is the cytoplasm. It is found in the nucleoid. Binds to DNA and alters its conformation. May be involved in regulation of gene expression, nucleoid organization and DNA protection. This is Nucleoid-associated protein Caul_4574 from Caulobacter sp. (strain K31).